The following is a 206-amino-acid chain: Alpha-1-acid glycoprotein 3 (206 aa).

A signal peptide spans 1-18; sequence MELHTVLIMLSLLPLLEA. Residues N33, N75, and N103 are each glycosylated (N-linked (GlcNAc...) asparagine). C90 and C183 are oxidised to a cystine. The tract at residues 187–206 is disordered; the sequence is EKKHLELEKETKKDPEESQA.

The protein belongs to the calycin superfamily. Lipocalin family.

The protein resides in the secreted. Its function is as follows. Functions as a transport protein in the blood stream. Binds various ligands in the interior of its beta-barrel domain. Appears to function in modulating the activity of the immune system during the acute-phase reaction. The polypeptide is Alpha-1-acid glycoprotein 3 (Orm3) (Mus musculus (Mouse)).